The primary structure comprises 238 residues: uncharacterized protein (238 aa).

The next 7 membrane-spanning stretches (helical) occupy residues 15 to 37 (FGALHFAIASVAVLLSALFVLLP), 50 to 69 (ARAGVAILFLRLGLMLCGTL), 79 to 96 (LPFHLCPAALISGSLYFI), 101 to 118 (IFFNLLYFWHFGSFVAVL), 128 to 150 (ILYAYLFMLTHCLEPAMVVFSLL), 163 to 183 (CAVLGFLLLAANALFWNRRLG), and 203 to 225 (FFVYQLLFVSALCLLMLVLYLPF).

It is found in the cell membrane. This is an uncharacterized protein from Treponema pallidum (strain Nichols).